The chain runs to 188 residues: Transmembrane protein 160 (188 aa).

The transit peptide at 1 to 96 directs the protein to the mitochondrion; it reads MGGGWWWARA…ISFMQSDMGR (96 aa). A disordered region spans residues 25-52; sequence PPRPRSGGARGSFAPGHGPRAGASPPPV. Residues 29-38 show a composition bias toward low complexity; the sequence is RSGGARGSFA. Serine 48 carries the phosphoserine modification. The next 2 helical transmembrane spans lie at 102–122 and 135–155; these read FFLLGGLCVVWGGASYVVGLA and AAAGVGAVLAAGLLWACAVGL.

This sequence belongs to the TMEM160 family.

The protein localises to the mitochondrion inner membrane. This Bos taurus (Bovine) protein is Transmembrane protein 160.